We begin with the raw amino-acid sequence, 551 residues long: Adenine deaminase (551 aa).

This sequence belongs to the metallo-dependent hydrolases superfamily. Adenine deaminase family. Mn(2+) serves as cofactor.

The enzyme catalyses adenine + H2O + H(+) = hypoxanthine + NH4(+). This chain is Adenine deaminase, found in Methanosarcina barkeri (strain Fusaro / DSM 804).